Reading from the N-terminus, the 267-residue chain is Indole-3-glycerol phosphate synthase (267 aa).

It belongs to the TrpC family.

It catalyses the reaction 1-(2-carboxyphenylamino)-1-deoxy-D-ribulose 5-phosphate + H(+) = (1S,2R)-1-C-(indol-3-yl)glycerol 3-phosphate + CO2 + H2O. Its pathway is amino-acid biosynthesis; L-tryptophan biosynthesis; L-tryptophan from chorismate: step 4/5. The chain is Indole-3-glycerol phosphate synthase from Cupriavidus necator (strain ATCC 17699 / DSM 428 / KCTC 22496 / NCIMB 10442 / H16 / Stanier 337) (Ralstonia eutropha).